A 57-amino-acid polypeptide reads, in one-letter code: Protein new-glue 4 (57 aa).

The signal sequence occupies residues 1–16 (MEWKLLLIVLPWLLVC).

The protein resides in the secreted. In Drosophila melanogaster (Fruit fly), this protein is Protein new-glue 4 (ng4).